The chain runs to 394 residues: Putative agmatinase 1 (394 aa).

The first 20 residues, 1-20, serve as a signal peptide directing secretion; sequence MALQSLFLILLAGAAQLAQA. Mn(2+) contacts are provided by histidine 186, aspartate 209, histidine 211, aspartate 213, aspartate 307, and aspartate 309.

It belongs to the arginase family. It depends on Mn(2+) as a cofactor.

The catalysed reaction is agmatine + H2O = urea + putrescine. The sequence is that of Putative agmatinase 1 from Schizosaccharomyces pombe (strain 972 / ATCC 24843) (Fission yeast).